The following is an 882-amino-acid chain: Protein O-mannosyl-transferase TMTC1 (882 aa).

At Met-1–Arg-20 the chain is on the cytoplasmic side. A disordered region spans residues Met-1–Arg-20. A helical transmembrane segment spans residues Gly-21–Tyr-41. The Extracellular portion of the chain corresponds to Gly-42 to Asn-110. Asn-86 is a glycosylation site (N-linked (GlcNAc...) asparagine). Residues Pro-111–Tyr-131 traverse the membrane as a helical segment. Residues Thr-132–Val-137 are Cytoplasmic-facing. The chain crosses the membrane as a helical span at residues Phe-138 to His-157. Residues Thr-158 to Ala-160 are Extracellular-facing. The helical transmembrane segment at Val-161–Leu-181 threads the bilayer. At Ser-182–Pro-197 the chain is on the cytoplasmic side. A helical transmembrane segment spans residues Ser-198–Val-218. Residues Lys-219 to Thr-221 lie on the Extracellular side of the membrane. A helical transmembrane segment spans residues Gly-222–Ser-238. The Cytoplasmic segment spans residues Asn-239–Arg-313. Residues Asn-246–Gln-277 form a disordered region. Low complexity predominate over residues Pro-251 to Gly-267. A helical membrane pass occupies residues Phe-314 to Leu-334. At Cys-335–Asn-354 the chain is on the extracellular side. Residues Leu-355 to Phe-375 form a helical membrane-spanning segment. The Cytoplasmic segment spans residues Lys-376–Lys-381. Residues Glu-382–Phe-402 form a helical membrane-spanning segment. Position 403 (Arg-403) is a topological domain, extracellular. Residues Val-404 to Phe-424 form a helical membrane-spanning segment. The Cytoplasmic segment spans residues Val-425 to Cys-438. Residues Gly-439–Val-459 form a helical membrane-spanning segment. Residues Lys-460–Thr-882 are Extracellular-facing. TPR repeat units follow at residues Ala-483–His-516, Ala-517–His-547, Asn-548–Phe-581, Ala-582–Ser-615, Ser-616–His-649, His-650–Lys-682, Ala-683–Gln-716, Leu-751–Asp-784, Ser-789–Gln-822, and Ala-823–Ser-856.

The protein belongs to the TMTC family. In terms of assembly, may interact with FAM168B.

The protein resides in the membrane. It is found in the endoplasmic reticulum. It catalyses the reaction a di-trans,poly-cis-dolichyl beta-D-mannosyl phosphate + L-seryl-[protein] = 3-O-(alpha-D-mannosyl)-L-seryl-[protein] + a di-trans,poly-cis-dolichyl phosphate + H(+). It carries out the reaction a di-trans,poly-cis-dolichyl beta-D-mannosyl phosphate + L-threonyl-[protein] = 3-O-(alpha-D-mannosyl)-L-threonyl-[protein] + a di-trans,poly-cis-dolichyl phosphate + H(+). Its pathway is protein modification; protein glycosylation. Transfers mannosyl residues to the hydroxyl group of serine or threonine residues. The 4 members of the TMTC family are O-mannosyl-transferases dedicated primarily to the cadherin superfamily, each member seems to have a distinct role in decorating the cadherin domains with O-linked mannose glycans at specific regions. Also acts as O-mannosyl-transferase on other proteins such as PDIA3. The polypeptide is Protein O-mannosyl-transferase TMTC1 (Homo sapiens (Human)).